A 149-amino-acid polypeptide reads, in one-letter code: Ribonuclease pancreatic (149 aa).

Positions 1-25 are cleaved as a signal peptide; the sequence is MGLEKSLILFPLLVLVLGWVQPSLA. Substrate is bound by residues Lys-32 and Arg-35. Catalysis depends on His-37, which acts as the Proton acceptor. Intrachain disulfides connect Cys-51–Cys-109, Cys-65–Cys-120, Cys-83–Cys-135, and Cys-90–Cys-97. Substrate is bound by residues 66–70, Lys-91, and Arg-110; that span reads KPVNT. His-144 acts as the Proton donor in catalysis.

This sequence belongs to the pancreatic ribonuclease family. Monomer. Interacts with and forms tight 1:1 complexes with RNH1. Dimerization of two such complexes may occur. Interaction with RNH1 inhibits this protein. As to expression, pancreas.

It localises to the secreted. It carries out the reaction an [RNA] containing cytidine + H2O = an [RNA]-3'-cytidine-3'-phosphate + a 5'-hydroxy-ribonucleotide-3'-[RNA].. The catalysed reaction is an [RNA] containing uridine + H2O = an [RNA]-3'-uridine-3'-phosphate + a 5'-hydroxy-ribonucleotide-3'-[RNA].. In terms of biological role, endonuclease that catalyzes the cleavage of RNA on the 3' side of pyrimidine nucleotides. Acts on single-stranded and double-stranded RNA. The protein is Ribonuclease pancreatic (RNASE1) of Uranomys ruddi (White-bellied brush-furred rat).